Reading from the N-terminus, the 203-residue chain is CASP-like protein 4B2 (203 aa).

The Cytoplasmic segment spans residues 1–57 (MAMVTADASAAADAATKQPDVEKDYSSYNGASTAGAGGGGVVESVVARWRREDMLDK). Residues 58 to 78 (CPLALHAAAAAFAFVALVLVA) traverse the membrane as a helical segment. Residues 79 to 92 (SNQHGDWMQFDRYQ) lie on the Extracellular side of the membrane. A helical transmembrane segment spans residues 93 to 113 (EYMYLLAIAALAFAYSLAQAL). The Cytoplasmic segment spans residues 114-135 (RHAHRMRGGADPIPAPSARLFD). Residues 136–156 (FIADQVVAYLLMSALSAAIPI) form a helical membrane-spanning segment. The Extracellular segment spans residues 157-171 (TNRMRTAVINNFTDA). The N-linked (GlcNAc...) asparagine glycan is linked to Asn167. A helical transmembrane segment spans residues 172 to 192 (TAAAISMAFLAFVALALSATV). Over 193–203 (SGYKLSRQMYM) the chain is Cytoplasmic.

Belongs to the Casparian strip membrane proteins (CASP) family. As to quaternary structure, homodimer and heterodimers.

It is found in the cell membrane. The sequence is that of CASP-like protein 4B2 from Hordeum vulgare subsp. vulgare (Domesticated barley).